Here is a 654-residue protein sequence, read N- to C-terminus: Tumor necrosis factor alpha-induced protein 2 (654 aa).

Disordered stretches follow at residues 1–38 (MSEASSEDLVPPLEAGAAPYREEEEAAKKKKEKKKKSK) and 50–78 (GKKKKGQPSSAEPEDAAGSRQGLDGPPPT). A compositionally biased stretch (basic residues) spans 28–38 (KKKKEKKKKSK).

It belongs to the SEC6 family.

In terms of biological role, may play a role as a mediator of inflammation and angiogenesis. The chain is Tumor necrosis factor alpha-induced protein 2 (TNFAIP2) from Homo sapiens (Human).